A 51-amino-acid polypeptide reads, in one-letter code: Large ribosomal subunit protein eL39 (51 aa).

The disordered stretch occupies residues 32-51 (KGSVKQHPKMRHWRRNTLKK). Over residues 33 to 51 (GSVKQHPKMRHWRRNTLKK) the composition is skewed to basic residues.

This sequence belongs to the eukaryotic ribosomal protein eL39 family.

This chain is Large ribosomal subunit protein eL39, found in Methanococcus vannielii (strain ATCC 35089 / DSM 1224 / JCM 13029 / OCM 148 / SB).